A 205-amino-acid polypeptide reads, in one-letter code: Thymidylate kinase (205 aa).

An ATP-binding site is contributed by 9 to 16 (GPEGSGKT).

This sequence belongs to the thymidylate kinase family.

It carries out the reaction dTMP + ATP = dTDP + ADP. Its function is as follows. Phosphorylation of dTMP to form dTDP in both de novo and salvage pathways of dTTP synthesis. The polypeptide is Thymidylate kinase (Staphylococcus aureus (strain NCTC 8325 / PS 47)).